Consider the following 421-residue polypeptide: Ubiquitin-like modifier-activating enzyme 5 (421 aa).

Residues Gly89, Asp110, Lys133, Asn156, and Asn191 each coordinate ATP. Zn(2+) contacts are provided by Cys233 and Cys236. Cys257 functions as the Glycyl thioester intermediate in the catalytic mechanism. Residues Cys310 and Cys315 each coordinate Zn(2+).

It belongs to the ubiquitin-activating E1 family. UBA5 subfamily.

E1-like enzyme which activates UFM1. The protein is Ubiquitin-like modifier-activating enzyme 5 of Oryza sativa subsp. japonica (Rice).